The sequence spans 502 residues: Cytochrome c-552 (502 aa).

Positions Met1 to Ala25 are cleaved as a signal peptide. His105 is a heme c binding site. Heme is bound by residues Cys133, Cys136, and Lys137. Residues Cys171, Cys174, His175, Cys220, Cys223, and His224 each contribute to the heme c site. Ca(2+) is bound by residues Glu226, Tyr227, Lys271, and Gln273. Tyr227 contributes to the substrate binding site. A substrate-binding site is contributed by His274. Residues His285, Cys292, Cys295, His296, His311, Cys324, Cys327, His328, and His403 each contribute to the heme c site. The tract at residues Arg481–Lys502 is disordered.

Belongs to the cytochrome c-552 family. The cofactor is Ca(2+). It depends on heme c as a cofactor.

The protein localises to the periplasm. The catalysed reaction is 6 Fe(III)-[cytochrome c] + NH4(+) + 2 H2O = 6 Fe(II)-[cytochrome c] + nitrite + 8 H(+). It functions in the pathway nitrogen metabolism; nitrate reduction (assimilation). Functionally, catalyzes the reduction of nitrite to ammonia, consuming six electrons in the process. This chain is Cytochrome c-552, found in Haemophilus ducreyi (strain 35000HP / ATCC 700724).